A 429-amino-acid chain; its full sequence is Arsenical pump membrane protein (429 aa).

Residues 1-20 (MLLAGAIFVLTIVLVIWQPK) are Cytoplasmic-facing. A helical membrane pass occupies residues 21-41 (GLGIGWSATLGAVLALVTGVV). The Periplasmic segment spans residues 42 to 45 (HPGD). A helical transmembrane segment spans residues 46 to 66 (IPVVWNIVWNATAAFIAVIII). At 67-97 (SLLLDESGFFEWAALHVSRWGNGRGRLLFTW) the chain is on the cytoplasmic side. A helical membrane pass occupies residues 98–118 (IVLLGAAVAALFANDGAALIL). Over 119 to 120 (TP) the chain is Periplasmic. Residues 121–141 (IVIAMLLALGFSKGTTLAFVM) form a helical membrane-spanning segment. Residues 142–151 (AAGFIADTAS) are Cytoplasmic-facing. A helical transmembrane segment spans residues 152–172 (LPLIVSNLVNIVSADFFGLGF). The Periplasmic segment spans residues 173 to 177 (REYAS). A helical transmembrane segment spans residues 178–198 (VMVPVDIAAIVATLVMLHLYF). Over 199–227 (RKDIPQNYDMALLKSPAEAIKDPATFKTG) the chain is Cytoplasmic. 2 helical membrane-spanning segments follow: residues 228 to 248 (WVVL…GIPV) and 249 to 269 (SAIA…GHAI). Residues 270-273 (NTGK) lie on the Cytoplasmic side of the membrane. A helical membrane pass occupies residues 274-294 (VLRGAPWQIVIFSLGMYLVVY). The Periplasmic portion of the chain corresponds to 295–310 (GLRNAGLTEYLSGVLN). Residues 311-331 (VLADNGLWAATLGTGFLTAFL) form a helical membrane-spanning segment. At 332-406 (SSIMNNMPTV…ISWGYYFRTG (75 aa)) the chain is on the cytoplasmic side. Residues 407–427 (IIMTLPVLFVTLAALALRLSF) traverse the membrane as a helical segment. Topologically, residues 428–429 (TL) are periplasmic.

The protein belongs to the ArsB family.

The protein localises to the cell inner membrane. In terms of biological role, involved in arsenical resistance. Thought to form the channel of an arsenite pump. The sequence is that of Arsenical pump membrane protein (arsB) from Shigella flexneri.